Reading from the N-terminus, the 218-residue chain is N-(5'-phosphoribosyl)anthranilate isomerase (218 aa).

This sequence belongs to the TrpF family.

The catalysed reaction is N-(5-phospho-beta-D-ribosyl)anthranilate = 1-(2-carboxyphenylamino)-1-deoxy-D-ribulose 5-phosphate. Its pathway is amino-acid biosynthesis; L-tryptophan biosynthesis; L-tryptophan from chorismate: step 3/5. This Rhodospirillum rubrum (strain ATCC 11170 / ATH 1.1.1 / DSM 467 / LMG 4362 / NCIMB 8255 / S1) protein is N-(5'-phosphoribosyl)anthranilate isomerase.